The primary structure comprises 293 residues: Inner membrane ABC transporter permease protein YcjO (293 aa).

Over 1 to 12 the chain is Periplasmic; sequence MNRLFSGRSDMP. The helical transmembrane segment at 13 to 33 threads the bilayer; sequence FALLLLAPSLLLLGGLVAWPM. The Cytoplasmic portion of the chain corresponds to 34 to 77; it reads VSNIEISFLRLPLNPNIESTFVGVSNYVRILSDPGFWHSLWMTV. The ABC transmembrane type-1 domain maps to 73 to 283; it reads LWMTVWYTAL…IIIFAVILLT (211 aa). Residues 78 to 98 traverse the membrane as a helical segment; the sequence is WYTALVVAGSTVLGLAVAMFF. The Periplasmic portion of the chain corresponds to 99–110; sequence NREFRLRKTARS. The chain crosses the membrane as a helical span at residues 111–131; the sequence is LVILSYVTPSISLVFAWKYMF. The Cytoplasmic portion of the chain corresponds to 132 to 135; that stretch reads NNGY. A helical transmembrane segment spans residues 136–156; sequence GIVNYLGVDLLHLYEQAPLWF. Residues 157 to 162 lie on the Periplasmic side of the membrane; the sequence is DNPGSS. Residues 163-183 form a helical membrane-spanning segment; it reads FVLVVLFAIWRYFPYAFISFL. Over 184–214 the chain is Cytoplasmic; it reads AILQTIDKSLYEAAEMDGANAWQRFRIVTLP. A helical membrane pass occupies residues 215-235; it reads AIMPVLATVVTLRTIWMFYMF. Residues 236 to 261 are Periplasmic-facing; it reads ADVYLLTTKVDILGVYLYKTAFAFND. Residues 262-282 form a helical membrane-spanning segment; sequence LGKAAAISVVLFIIIFAVILL. Topologically, residues 283–293 are cytoplasmic; the sequence is TRKRVNLNGNK.

It belongs to the binding-protein-dependent transport system permease family. MalFG subfamily.

The protein localises to the cell inner membrane. Probably part of the binding-protein-dependent transport system YcjNOP. Probably responsible for the translocation of the substrate across the membrane. This Escherichia coli (strain K12) protein is Inner membrane ABC transporter permease protein YcjO (ycjO).